We begin with the raw amino-acid sequence, 317 residues long: Putative ribosomal protein uL10-like (317 aa).

Phosphotyrosine is present on tyrosine 24. Threonine 59 carries the post-translational modification Phosphothreonine. Positions 292 to 317 (AAAPAKVEAKEESEESDEDMGFGLFD) are disordered. Residue lysine 297 forms a Glycyl lysine isopeptide (Lys-Gly) (interchain with G-Cter in SUMO1); alternate linkage. Residue lysine 297 forms a Glycyl lysine isopeptide (Lys-Gly) (interchain with G-Cter in SUMO2); alternate linkage. Positions 302-311 (EESEESDEDM) are enriched in acidic residues. Residues serine 304 and serine 307 each carry the phosphoserine modification.

This sequence belongs to the universal ribosomal protein uL10 family. As to quaternary structure, P0 forms a pentameric complex by interaction with dimers of P1 and P2.

Functionally, ribosomal protein P0 is the functional equivalent of E.coli protein L10. The sequence is that of Putative ribosomal protein uL10-like (RPLP0P6) from Homo sapiens (Human).